The sequence spans 844 residues: MAAFAQYTLSTGWYFKDRDELASEAWMPVPVVPSVVHQDLQANGKLKNPYVGFNELDARWVNEKSWTYRKILQKPTVLAGSRIVLAFDGLDTFAKVKLDNNIILESSNMFQAYRVDVTKALDCGDEHVLEIEFDCAMLRAQELRKQDPNHNWASFNGDPARMSVRKAQYHWGWDWGPVLMTAGIWRAVRLEVYSTRLADLWTEINLDPTHKTASISAFTELESVDLDPSYKVKFTITLHGKQIAQAEATPQEGRAKVEFNIDQPCLWWPHGYGDSTLYEVSASLNADQLELHRVTKKIGIRTAEVVQRPDKHGKSFFFRINGVDIFCGGSCWIPADNLLPNISPQRYRKWIQLMVAGRQAMIRVWGGGCYEDDSFYEACDELGVLVWQDFMFGCGNYPTWPELLKSIEQEAIYNVRRLRHHPSIVVYVGNNEDYQVQEQAGLEYNYEDKNPENWLKTNFPARYIYEELLPSVVERCSPKTFYHPGSPWGDGKITSDPTVGDMHQWNVWHGTQEKYQIFDTLGGRFNSEFGMEAFPHLSTIEYFVENEKDKYPQSHVLDFHNKADGHERRIATYLVENLRTATDLETYIYLTQVVQAETMMFGYRGWRRQWGDERHCGGALLWQLNDCWPTISWAIVDYFLRPKPAYYAVARVLNPVAVGVRREHHDWSITHAQPPKTSKYELWVVSSLQKPASGKVELRFLSVDTGREIRERIVRENVDIVPNGTTNLITDGLIDHTVDAEPHVLAARLWVDGEIVARDVDWPQPFKYLDFADRGLEVKRVSEASDQQVFQISTEKPVKCLVFEERDGVKFSDSAMDIVPGDVQTVKVTGLRADEKLKYKFLGQ.

The active-site Proton donor is E432. An N-linked (GlcNAc...) asparagine glycan is attached at N723.

The protein belongs to the glycosyl hydrolase 2 family. Beta-mannosidase B subfamily.

The catalysed reaction is Hydrolysis of terminal, non-reducing beta-D-mannose residues in beta-D-mannosides.. The protein operates within glycan metabolism; N-glycan degradation. In terms of biological role, exoglycosidase that cleaves the single beta-linked mannose residue from the non-reducing end of beta-mannosidic oligosaccharides of various complexity and length. Prefers mannobiose over mannotriose and has no activity against polymeric mannan. Is also severely restricted by galactosyl substitutions at the +1 subsite. The sequence is that of Beta-mannosidase B (mndB) from Aspergillus niger (strain ATCC MYA-4892 / CBS 513.88 / FGSC A1513).